The chain runs to 554 residues: MNSKEVTKGVARAPHRSLFYAMGYTPEDLKKPLIGIVNSHNEIIPGHFHLNEIVQAVKLGVASAGGTPIEIPSIGICDGISMNHSGMKYPLASRELIADSIEAMTIAHKFDALVLVGNCDKIVPGMLMGAARLNVPAIYVSGGPMLPGKLKGKKIDLVHGAFEAVGSYAEGILSDDDLNKIEQHSCPTCGSCAGLFTANSMNSLAEALGVALPGNGTIPAPYGRRKQLAKYAGVKIMELVKKKIKLRDILTKEAFKNAIALDMAIGGSSNTTLHLMAIAHEAKVYLTLEDFDEISRRIPHITKLSPAGTHHMVDLDEAGGISAVLKELMDANLIFKDQLTVTGKTLEENIKNSLVLNDSVIRPLNNPYSNEGGIAILRGNLAPDGAVVKQSAVEPEMLYHKGVARVFDGEELAFDAIMNKKIHPGDVVVIRYEGPKGCPGMREMLSPTAAIIGLGLEKSTALITDGRFSGGTRGPCIGHISPEASEGGPIALIEEGDLIEIDISNRRISLLVSPEELSKRKENWIQPPCKAPDGTYLKRYSKLVTSASTGAVLE.

Position 78 (Asp-78) interacts with Mg(2+). Cys-119 contributes to the [2Fe-2S] cluster binding site. Residues Asp-120 and Lys-121 each contribute to the Mg(2+) site. Position 121 is an N6-carboxylysine (Lys-121). Cys-192 provides a ligand contact to [2Fe-2S] cluster. Residue Glu-443 coordinates Mg(2+). Residue Ser-469 is the Proton acceptor of the active site.

The protein belongs to the IlvD/Edd family. Homodimer. The cofactor is [2Fe-2S] cluster. Requires Mg(2+) as cofactor.

It carries out the reaction (2R)-2,3-dihydroxy-3-methylbutanoate = 3-methyl-2-oxobutanoate + H2O. The catalysed reaction is (2R,3R)-2,3-dihydroxy-3-methylpentanoate = (S)-3-methyl-2-oxopentanoate + H2O. Its pathway is amino-acid biosynthesis; L-isoleucine biosynthesis; L-isoleucine from 2-oxobutanoate: step 3/4. It functions in the pathway amino-acid biosynthesis; L-valine biosynthesis; L-valine from pyruvate: step 3/4. Functionally, functions in the biosynthesis of branched-chain amino acids. Catalyzes the dehydration of (2R,3R)-2,3-dihydroxy-3-methylpentanoate (2,3-dihydroxy-3-methylvalerate) into 2-oxo-3-methylpentanoate (2-oxo-3-methylvalerate) and of (2R)-2,3-dihydroxy-3-methylbutanoate (2,3-dihydroxyisovalerate) into 2-oxo-3-methylbutanoate (2-oxoisovalerate), the penultimate precursor to L-isoleucine and L-valine, respectively. This chain is Dihydroxy-acid dehydratase, found in Clostridium novyi (strain NT).